The primary structure comprises 261 residues: METEVEHTGLAIHPMDQFIVKKLFCHTESTAPMNECTTNIHWYDITNVTMWMAIAVLVIAAILVLGTRRRAIVPSRSQSVAELLYGFIHNMVEEVTGHEGVKYFPYVMTLFLFVLCGNVLGLLPLSFTTTSHMAVTVPLALMVFVGVTALGFMKNGPGFLKMFWVTSAPLAIRPVLAVIEVISYFVRPVSHSIRLAGNMMAGHAVIKVIAGFASIVVVSPVVVGAVTAIYALELLVAVVQAYVFTILTCVYLRDAVGDAHH.

The next 6 helical transmembrane spans lie at 45-65, 107-127, 133-153, 162-182, 209-229, and 232-252; these read ITNVTMWMAIAVLVIAAILVL, VMTLFLFVLCGNVLGLLPLSF, MAVTVPLALMVFVGVTALGFM, MFWVTSAPLAIRPVLAVIEVI, IAGFASIVVVSPVVVGAVTAI, and LELLVAVVQAYVFTILTCVYL.

It belongs to the ATPase A chain family. F-type ATPases have 2 components, CF(1) - the catalytic core - and CF(0) - the membrane proton channel. CF(1) has five subunits: alpha(3), beta(3), gamma(1), delta(1), epsilon(1). CF(0) has four main subunits: a, b, b' and c.

The protein localises to the cell inner membrane. Key component of the proton channel; it plays a direct role in the translocation of protons across the membrane. This is ATP synthase subunit a from Cereibacter sphaeroides (strain ATCC 17029 / ATH 2.4.9) (Rhodobacter sphaeroides).